The chain runs to 485 residues: Glutamyl-tRNA(Gln) amidotransferase subunit A (485 aa).

Catalysis depends on charge relay system residues K79 and S154. The active-site Acyl-ester intermediate is the S178.

This sequence belongs to the amidase family. GatA subfamily. In terms of assembly, heterotrimer of A, B and C subunits.

It carries out the reaction L-glutamyl-tRNA(Gln) + L-glutamine + ATP + H2O = L-glutaminyl-tRNA(Gln) + L-glutamate + ADP + phosphate + H(+). In terms of biological role, allows the formation of correctly charged Gln-tRNA(Gln) through the transamidation of misacylated Glu-tRNA(Gln) in organisms which lack glutaminyl-tRNA synthetase. The reaction takes place in the presence of glutamine and ATP through an activated gamma-phospho-Glu-tRNA(Gln). This Clostridium botulinum (strain ATCC 19397 / Type A) protein is Glutamyl-tRNA(Gln) amidotransferase subunit A.